A 2170-amino-acid polypeptide reads, in one-letter code: Brefeldin A-inhibited guanine nucleotide-exchange protein 3 (2170 aa).

Ser-471 carries the post-translational modification Phosphoserine. Disordered regions lie at residues 489 to 547 (EHTP…MGKV) and 613 to 634 (AAEK…CSLA). Residues 503–524 (ISISVTTDTGQTTLEGELGQTT) show a composition bias toward polar residues. The region spanning 579–792 (RTRSYGSRYS…EELYHQVLDR (214 aa)) is the SEC7 domain. Basic and acidic residues predominate over residues 614-623 (AEKDSGRSDV). Residues Ser-628, Ser-632, and Ser-1045 each carry the phosphoserine modification. The chain crosses the membrane as a helical span at residues 1488-1508 (PGFGIYAVVHLLLPVMSLWLL). The interval 1843-1872 (SSDSSQQCSSEDEDIFEETAQVSPPRGKEK) is disordered. Ser-1881 is subject to Phosphoserine. Residues 1938 to 1955 (FQSESSTPSTGGFSGKNT) show a composition bias toward polar residues. Disordered stretches follow at residues 1938–1997 (FQSE…RKKE) and 2024–2058 (KRRQ…PLLQ). Over residues 1956 to 1966 (PSEDDRREHLS) the composition is skewed to basic and acidic residues. Ser-1975 and Ser-1984 each carry phosphoserine. Composition is skewed to basic and acidic residues over residues 1986–1997 (KTEKKDPGRKKE) and 2036–2045 (KEVKVDKKGE). Residues Ser-2072, Ser-2074, Ser-2088, Ser-2094, and Ser-2096 each carry the phosphoserine modification. Residues 2078 to 2097 (ELLRQEKRPRSGSTGSSLSV) form a disordered region. A compositionally biased stretch (low complexity) spans 2088–2097 (SGSTGSSLSV).

In terms of assembly, interacts with PHB2. Expressed in pancreatic islet (insulin granules of islet alpha and beta cells) and brain (at protein level).

It is found in the cytoplasmic vesicle. The protein localises to the secretory vesicle. The protein resides in the secretory vesicle membrane. In terms of biological role, participates in the regulation of systemic glucose homeostasis, where it negatively regulates insulin granule biogenesis in pancreatic islet beta cells. Also regulates glucagon granule production in pancreatic alpha cells. Inhibits nuclear translocation of the transcriptional coregulator PHB2 and may enhance estrogen receptor alpha (ESR1) transcriptional activity in breast cancer cells. The chain is Brefeldin A-inhibited guanine nucleotide-exchange protein 3 from Mus musculus (Mouse).